Here is a 161-residue protein sequence, read N- to C-terminus: Ureidoglycolate lyase (161 aa).

Belongs to the ureidoglycolate lyase family. In terms of assembly, homodimer. It depends on Ni(2+) as a cofactor.

It carries out the reaction (S)-ureidoglycolate = urea + glyoxylate. It functions in the pathway nitrogen metabolism; (S)-allantoin degradation. In terms of biological role, catalyzes the catabolism of the allantoin degradation intermediate (S)-ureidoglycolate, generating urea and glyoxylate. Involved in the utilization of allantoin as nitrogen source. This Rhodobacter capsulatus (strain ATCC BAA-309 / NBRC 16581 / SB1003) protein is Ureidoglycolate lyase.